We begin with the raw amino-acid sequence, 212 residues long: MHILVTGFAPFDNQDINPSWEAVTQLENIIGTHTIDKLKLPTSFKKVDTIINKTLASNHYDVVLAIGQAGGRNAITPERVAINIDDARIPDNDDFQPIDQAIHLDGAPRYFSNLPVKAMTQSVINQGLPGALSNSAGTFVCNHVLYHLGYLQDKHYPHLRFGFIHVPYIPEQVVGKSDTPSMPLEQIVAGLTAAIEAISDHDDLRIALGTTE.

Catalysis depends on residues Glu-78, Cys-141, and His-165.

It belongs to the peptidase C15 family. Homotetramer.

It localises to the cytoplasm. The catalysed reaction is Release of an N-terminal pyroglutamyl group from a polypeptide, the second amino acid generally not being Pro.. Removes 5-oxoproline from various penultimate amino acid residues except L-proline. In Staphylococcus aureus, this protein is Pyrrolidone-carboxylate peptidase (pcp).